The primary structure comprises 127 residues: uncharacterized protein (127 aa).

Residues 1–16 (MIKKIIFGIAILLSLS) form the signal peptide. A lipid anchor (N-palmitoyl cysteine) is attached at Cys-17. The S-diacylglycerol cysteine moiety is linked to residue Cys-17. The stretch at 56–101 (EVRKEIQEYRVEIVDINKKKRELYNSLSKEAQNFLAEQQKYKQKLS) forms a coiled coil. Residues 101-127 (SISKLPTEDDSPNNTANSKDNKDTDTK) form a disordered region.

Its subcellular location is the cell membrane. This is an uncharacterized protein from Rickettsia felis (strain ATCC VR-1525 / URRWXCal2) (Rickettsia azadi).